A 540-amino-acid chain; its full sequence is Cytochrome bc1 complex cytochrome b subunit (540 aa).

A helical membrane pass occupies residues 40–60; it reads EIALYSFIILLLTGVYLTLFF. Residues His105 and His119 each coordinate heme. 3 helical membrane passes run 109–129, 137–157, and 169–189; these read ALTF…TGAF, WIIG…GYSL, and IMSA…WLIF. His206 and His221 together coordinate heme. Helical transmembrane passes span 207–227, 259–279, 325–345, 371–391, and 408–428; these read VLII…LVWY, FGLV…INAI, AFWV…YPFI, LGVM…NDLF, and IGLI…CLGL.

Belongs to the cytochrome b family. The cytochrome bc1 complex is composed of a cytochrome b (QcrB), the Rieske protein iron-sulfur (QcrA) and a diheme cytochrome c (QcrC) subunit. The cofactor is heme.

Its subcellular location is the cell membrane. It catalyses the reaction a quinol + 2 Fe(III)-[cytochrome c](out) = a quinone + 2 Fe(II)-[cytochrome c](out) + 2 H(+)(out). Functionally, cytochrome b subunit of the cytochrome bc1 complex, an essential component of the respiratory electron transport chain required for ATP synthesis. The bc1 complex catalyzes the oxidation of menaquinol and the reduction of cytochrome c in the respiratory chain. The bc1 complex operates through a Q-cycle mechanism that couples electron transfer to generation of the proton gradient that drives ATP synthesis. The sequence is that of Cytochrome bc1 complex cytochrome b subunit (qcrB) from Corynebacterium diphtheriae (strain ATCC 700971 / NCTC 13129 / Biotype gravis).